The following is a 34-amino-acid chain: Photosystem II reaction center protein M (34 aa).

A helical transmembrane segment spans residues Gly-7 to Ile-27.

The protein belongs to the PsbM family. As to quaternary structure, PSII is composed of 1 copy each of membrane proteins PsbA, PsbB, PsbC, PsbD, PsbE, PsbF, PsbH, PsbI, PsbJ, PsbK, PsbL, PsbM, PsbT, PsbX, PsbY, PsbZ, Psb30/Ycf12, peripheral proteins PsbO, CyanoQ (PsbQ), PsbU, PsbV and a large number of cofactors. It forms dimeric complexes.

It is found in the cellular thylakoid membrane. In terms of biological role, one of the components of the core complex of photosystem II (PSII). PSII is a light-driven water:plastoquinone oxidoreductase that uses light energy to abstract electrons from H(2)O, generating O(2) and a proton gradient subsequently used for ATP formation. It consists of a core antenna complex that captures photons, and an electron transfer chain that converts photonic excitation into a charge separation. This subunit is found at the monomer-monomer interface. This chain is Photosystem II reaction center protein M, found in Synechococcus sp. (strain CC9605).